The sequence spans 509 residues: ATP synthase subunit alpha (509 aa).

Residue 169–176 (GDRQTGKT) participates in ATP binding.

Belongs to the ATPase alpha/beta chains family. As to quaternary structure, F-type ATPases have 2 components, CF(1) - the catalytic core - and CF(0) - the membrane proton channel. CF(1) has five subunits: alpha(3), beta(3), gamma(1), delta(1), epsilon(1). CF(0) has four main subunits: a(1), b(1), b'(1) and c(9-12).

It is found in the cellular chromatophore membrane. The catalysed reaction is ATP + H2O + 4 H(+)(in) = ADP + phosphate + 5 H(+)(out). Functionally, produces ATP from ADP in the presence of a proton gradient across the membrane. The alpha chain is a regulatory subunit. This chain is ATP synthase subunit alpha, found in Rhodobacter capsulatus (Rhodopseudomonas capsulata).